Here is a 406-residue protein sequence, read N- to C-terminus: Prenyltransferase phqJ (406 aa).

Residues 1–19 show a composition bias toward polar residues; that stretch reads MTVSTESNFPHGASTQKPQ. The tract at residues 1–23 is disordered; sequence MTVSTESNFPHGASTQKPQSAEP. Residue glutamate 99 participates in brevianamide F binding. Dimethylallyl diphosphate contacts are provided by arginine 113, lysine 200, and tyrosine 202. Tyrosine 204 serves as a coordination point for brevianamide F. Dimethylallyl diphosphate contacts are provided by lysine 269, tyrosine 271, and tyrosine 340.

This sequence belongs to the tryptophan dimethylallyltransferase family.

It functions in the pathway alkaloid biosynthesis. Functionally, prenyltransferase; part of the gene cluster that mediates the biosynthesis of paraherquamide, a fungal indole alkaloid that belongs to a family of natural products containing a characteristic bicyclo[2.2.2]diazaoctane core. The first steps in the biosynthesis of paraherquamide is the production of the beta-methyl-proline precursor from L-isoleucine. They require oxidation of a terminally hydroxylated L-isoleucine to the corresponding aldehyde by enzymes which have still to be identified. Spontaneous cyclization and dehydration would yield the 4-methyl pyrolline-5-carboxylic acid, which is then reduced by the pyrroline-5-carboxylate reductase phqD leading to the beta-methyl-proline precursor. The next step of paraherquamide biosynthesis involves coupling of beta-methyl-proline and L-tryptophan by the bimodular NRPS phqB, to produce a monooxopiperazine intermediate. The reductase (R) domain of phqB utilizes NADPH for hydride transfer to reduce the thioester bond of the T domain-tethered linear dipeptide to a hemithioaminal intermediate, which spontaneously cleaves the C-S bond to release the aldehyde product. This compound undergoes spontaneous cyclization and dehydration to give a dienamine which is reverse prenylated at C-2 by the reverse prenyltransferase phqJ. The other prenyltransferase present in the cluster, phqI may be a redundant gene in the pathway. During biosynthetic assembly, the key step to produce the polycyclic core is catalyzed by the bifunctional reductase and intramolecular [4+2] Diels-Alderase, phqE, resulting in formation of the [2.2.2] diazaoctane intermediate preparaherquamide. Following formation of preparaherquamide, an indole 2,3-epoxidation-initiated pinacol-like rearrangement is catalyzed by the phqK FAD-dependent monooxygenase. The prenyltransferase phqA, the cytochrome P450 monooxygenase phqL, and the FAD-linked oxidoreductase phqH (or the cytochrome P450 monooxygenase phqM), are proposed to be involved in the formation of the pyran ring. The FAD-dependent monooxygenase phqK is likely responsible for generation of the spiro-oxindole, and the N-methylation is likely mediated by the phqN methyltransferase leading to the isolable natural product paraherquamide F. However, the order of these biosynthetic steps has still to be determined. In late-stage paraherquamide biosynthesis, the third P450 monooxygenase, phqO, is probably responsible for the C-14 hydroxylation, transforming paraherquamide F to paraherquamide G, and paraherquamide E to the final product paraherquamide A. The expansion from the 6-membered ring pyran (in paraherquamides F and G) to the 7-membered dioxepin ring (in paraherquamides A and E) represents a poorly understood but intriguing process that probably involves the 2-oxoglutarate-dependent dioxygenase phqC. Finally, the remaining members of the paraherquamide cluster, including phqI as well as phqM (or phqH), do not have a clearly prescribed role and appear to be redundant. This chain is Prenyltransferase phqJ, found in Penicillium fellutanum.